The following is a 276-amino-acid chain: Inositol-1-monophosphatase ImpA (276 aa).

4 residues coordinate Mg(2+): glutamate 74, aspartate 90, isoleucine 92, and aspartate 93. Glutamate 74 lines the substrate pocket. Residues 92–95, arginine 192, and aspartate 221 each bind substrate; that span reads IDGT. Mg(2+) is bound at residue aspartate 221.

The protein belongs to the inositol monophosphatase superfamily. It depends on Mg(2+) as a cofactor.

The catalysed reaction is a myo-inositol phosphate + H2O = myo-inositol + phosphate. It participates in polyol metabolism; myo-inositol biosynthesis; myo-inositol from D-glucose 6-phosphate: step 2/2. Functionally, catalyzes the dephosphorylation of inositol 1-phosphate (I-1-P) to yield free myo-inositol, a key metabolite in mycobacteria. This is Inositol-1-monophosphatase ImpA (impA) from Mycolicibacterium smegmatis (strain ATCC 700084 / mc(2)155) (Mycobacterium smegmatis).